The primary structure comprises 574 residues: DNA polymerase alpha subunit B (574 aa).

Belongs to the DNA polymerase alpha subunit B family. In terms of assembly, component of the alpha DNA polymerase complex (also known as the alpha DNA polymerase-primase complex) consisting of four subunits: the catalytic subunit pol1, the accessory subunit spb70/pol12, and the primase complex subunits spp1/pri1 and spp2/pri2 respectively. Interacts with orc1. Interacts with orc2; the interaction occurs on the chromatin, is stable thoughout the cell cycle and is independent from spb70 role in the alpha DNA polymerase complex. Post-translationally, phosphorylated in a cell cycle-dependent manner.

It is found in the nucleus. The protein localises to the chromosome. Functionally, accessory subunit of the DNA polymerase alpha complex (also known as the alpha DNA polymerase-primase complex) which plays an essential role in the initiation of DNA synthesis. During the S phase of the cell cycle, the DNA polymerase alpha complex (composed of a catalytic subunit pol1, an accessory subunit spb70/pol12 and two primase subunits, the catalytic subunit spp1/pri1 and the regulatory subunit spp2/pri2) is recruited to DNA at the replicative forks. The primase subunit of the polymerase alpha complex initiates DNA synthesis by oligomerising short RNA primers on both leading and lagging strands. In Schizosaccharomyces pombe (strain 972 / ATCC 24843) (Fission yeast), this protein is DNA polymerase alpha subunit B.